Here is a 539-residue protein sequence, read N- to C-terminus: Putative cysteine ligase BshC (539 aa).

The stretch at 455 to 475 (LQKNAAFIQDQLLFLERTVTK) forms a coiled coil.

It belongs to the BshC family.

Involved in bacillithiol (BSH) biosynthesis. May catalyze the last step of the pathway, the addition of cysteine to glucosamine malate (GlcN-Mal) to generate BSH. This Bacillus velezensis (strain DSM 23117 / BGSC 10A6 / LMG 26770 / FZB42) (Bacillus amyloliquefaciens subsp. plantarum) protein is Putative cysteine ligase BshC.